An 817-amino-acid chain; its full sequence is Rho GTPase-activating protein gacII (817 aa).

The Rho-GAP domain occupies 20-204 (TTIVKIGTPK…TLIEEFQYIS (185 aa)). The SH3 domain maps to 238-298 (EDYLIAKANT…SQTYVDIIDI (61 aa)). Residues 318-339 (ASTILHTPPTSSSSSSSSSSSS) show a composition bias toward low complexity. Disordered stretches follow at residues 318 to 638 (ASTI…NIPV), 691 to 771 (LGGQ…QQQQ), and 783 to 817 (LPPQ…FNKN). Residues 340 to 358 (ILLTDNQPKLCSSTPRINN) show a composition bias toward polar residues. The segment covering 359–391 (SPSSFSPSLSSTTPQLLVQQSPRQSPRQIPSIS) has biased composition (low complexity). Over residues 396–438 (PNNTNQPSFGHGTLQRTSTGYFSSKPLSISQPINMSKPTNMSP) the composition is skewed to polar residues. Residues 461 to 471 (PPLPTKPPPLT) show a composition bias toward pro residues. The span at 472 to 498 (IPSSSSLPTTPIKQQPQQPIQQPLTPQ) shows a compositional bias: low complexity. A compositionally biased stretch (polar residues) spans 509 to 532 (LSSSVNTANTGNCANILSPNSDRY). Low complexity-rich tracts occupy residues 534 to 568 (SSRS…SSTS), 577 to 587 (KSKSSKNSPSK), and 607 to 624 (ITTT…TIAT). Residues 625 to 635 (TPPPPSKPLPN) show a composition bias toward pro residues. A compositionally biased stretch (polar residues) spans 705-722 (KSQSSYLDNNNLPSRNTN). The segment covering 725 to 734 (NLPPRPPPLN) has biased composition (pro residues). Composition is skewed to low complexity over residues 735–744 (IPQQQQQYKP) and 752–771 (QSPQ…QQQQ). Residues 785–803 (PQNTNLSGKNLQRSSTSML) show a composition bias toward polar residues. Residues 807–817 (LPPPPFSFNKN) show a composition bias toward pro residues.

Its subcellular location is the cytoplasm. Rho GTPase-activating protein involved in the signal transduction pathway. This chain is Rho GTPase-activating protein gacII (gacII), found in Dictyostelium discoideum (Social amoeba).